The following is a 128-amino-acid chain: MVLPASMRLRGSRCFERLQKWGYRFYGTSMVLRVIEADPQLLKAPHRHHNSTACRCAVVISSKVSKRAVIRNRLRRRLHNHLRSRLEVAPEHCNHWVLISLKPVASAIEASPLLEECDRLLHQAGLLS.

The protein belongs to the RnpA family. Consists of a catalytic RNA component (M1 or rnpB) and a protein subunit.

The catalysed reaction is Endonucleolytic cleavage of RNA, removing 5'-extranucleotides from tRNA precursor.. Functionally, RNaseP catalyzes the removal of the 5'-leader sequence from pre-tRNA to produce the mature 5'-terminus. It can also cleave other RNA substrates such as 4.5S RNA. The protein component plays an auxiliary but essential role in vivo by binding to the 5'-leader sequence and broadening the substrate specificity of the ribozyme. The polypeptide is Ribonuclease P protein component (Prochlorococcus marinus (strain MIT 9303)).